The following is a 398-amino-acid chain: Argininosuccinate synthase (398 aa).

Position 8 to 16 (8 to 16) interacts with ATP; sequence AYSGGLDTS. Tyr-87 contacts L-citrulline. Gly-117 serves as a coordination point for ATP. L-aspartate contacts are provided by Thr-119, Asn-123, and Asp-124. Asn-123 provides a ligand contact to L-citrulline. Residues Arg-127, Ser-175, Glu-260, and Tyr-272 each contribute to the L-citrulline site.

It belongs to the argininosuccinate synthase family. Type 1 subfamily. Homotetramer.

The protein localises to the cytoplasm. It catalyses the reaction L-citrulline + L-aspartate + ATP = 2-(N(omega)-L-arginino)succinate + AMP + diphosphate + H(+). Its pathway is amino-acid biosynthesis; L-arginine biosynthesis; L-arginine from L-ornithine and carbamoyl phosphate: step 2/3. This Mycobacterium avium (strain 104) protein is Argininosuccinate synthase.